The chain runs to 557 residues: Dihydroxy-acid dehydratase (557 aa).

Asp78 is a Mg(2+) binding site. Cys119 lines the [2Fe-2S] cluster pocket. Mg(2+) is bound by residues Asp120 and Lys121. Lys121 bears the N6-carboxylysine mark. Position 192 (Cys192) interacts with [2Fe-2S] cluster. Glu443 lines the Mg(2+) pocket. Residue Ser469 is the Proton acceptor of the active site.

Belongs to the IlvD/Edd family. In terms of assembly, homodimer. It depends on [2Fe-2S] cluster as a cofactor. The cofactor is Mg(2+).

It carries out the reaction (2R)-2,3-dihydroxy-3-methylbutanoate = 3-methyl-2-oxobutanoate + H2O. The enzyme catalyses (2R,3R)-2,3-dihydroxy-3-methylpentanoate = (S)-3-methyl-2-oxopentanoate + H2O. It functions in the pathway amino-acid biosynthesis; L-isoleucine biosynthesis; L-isoleucine from 2-oxobutanoate: step 3/4. Its pathway is amino-acid biosynthesis; L-valine biosynthesis; L-valine from pyruvate: step 3/4. Functions in the biosynthesis of branched-chain amino acids. Catalyzes the dehydration of (2R,3R)-2,3-dihydroxy-3-methylpentanoate (2,3-dihydroxy-3-methylvalerate) into 2-oxo-3-methylpentanoate (2-oxo-3-methylvalerate) and of (2R)-2,3-dihydroxy-3-methylbutanoate (2,3-dihydroxyisovalerate) into 2-oxo-3-methylbutanoate (2-oxoisovalerate), the penultimate precursor to L-isoleucine and L-valine, respectively. The polypeptide is Dihydroxy-acid dehydratase (Persephonella marina (strain DSM 14350 / EX-H1)).